Consider the following 253-residue polypeptide: MQKLIMGNWKMNGSSASIKELCKGISEVNYNSEKVAVAVFPSSVYVKEVLAQLPKEIGVGLQNITFYDNGAYTGELSAEMLHDVGCNYLLIGHSERRSLFGETDQDVFKKLNKIIDTSVVPVVCIGESLEDRQGGRLEKVLTTQLSLILENLSIEQLARVIIAYEPVWAIGTGVVASLEQVQETHQFIRSLVAKVDENLAKNMKIVYGGSLKAENAKDILSLPDVDGGLIGGASLKASEFNEIINQANKICTE.

Asn8 to Lys10 serves as a coordination point for substrate. Residue His93 is the Electrophile of the active site. Residue Glu165 is the Proton acceptor of the active site. Residues Gly171, Ser210, and Gly231 to Gly232 each bind substrate.

The protein belongs to the triosephosphate isomerase family. In terms of assembly, homodimer.

It is found in the cytoplasm. It catalyses the reaction D-glyceraldehyde 3-phosphate = dihydroxyacetone phosphate. Its pathway is carbohydrate biosynthesis; gluconeogenesis. The protein operates within carbohydrate degradation; glycolysis; D-glyceraldehyde 3-phosphate from glycerone phosphate: step 1/1. Functionally, involved in the gluconeogenesis. Catalyzes stereospecifically the conversion of dihydroxyacetone phosphate (DHAP) to D-glyceraldehyde-3-phosphate (G3P). In Francisella philomiragia subsp. philomiragia (strain ATCC 25017 / CCUG 19701 / FSC 153 / O#319-036), this protein is Triosephosphate isomerase.